A 202-amino-acid chain; its full sequence is Large ribosomal subunit protein bL25 (202 aa).

This sequence belongs to the bacterial ribosomal protein bL25 family. CTC subfamily. Part of the 50S ribosomal subunit; part of the 5S rRNA/L5/L18/L25 subcomplex. Contacts the 5S rRNA. Binds to the 5S rRNA independently of L5 and L18.

This is one of the proteins that binds to the 5S RNA in the ribosome where it forms part of the central protuberance. The protein is Large ribosomal subunit protein bL25 of Nitrosomonas eutropha (strain DSM 101675 / C91 / Nm57).